We begin with the raw amino-acid sequence, 282 residues long: Energy-coupling factor transporter ATP-binding protein EcfA1 (282 aa).

One can recognise an ABC transporter domain in the interval 6–243 (ISFDHVTFTY…VEMLKRIGLD (238 aa)). Residue 40 to 47 (GHNGSGKS) participates in ATP binding.

Belongs to the ABC transporter superfamily. Energy-coupling factor EcfA family. As to quaternary structure, forms a stable energy-coupling factor (ECF) transporter complex composed of 2 membrane-embedded substrate-binding proteins (S component), 2 ATP-binding proteins (A component) and 2 transmembrane proteins (T component).

The protein localises to the cell membrane. Functionally, ATP-binding (A) component of a common energy-coupling factor (ECF) ABC-transporter complex. Unlike classic ABC transporters this ECF transporter provides the energy necessary to transport a number of different substrates. This chain is Energy-coupling factor transporter ATP-binding protein EcfA1, found in Lactobacillus delbrueckii subsp. bulgaricus (strain ATCC 11842 / DSM 20081 / BCRC 10696 / JCM 1002 / NBRC 13953 / NCIMB 11778 / NCTC 12712 / WDCM 00102 / Lb 14).